The primary structure comprises 442 residues: Envelope glycoprotein D (442 aa).

Residues 1 to 19 (MPAVLLVLYVNPPPSVCIL) form the signal peptide. Topologically, residues 20–405 (TQKLSLGLYN…NSTFVGISVG (386 aa)) are virion surface. Residues asparagine 103 and asparagine 111 are each glycosylated (N-linked (GlcNAc...) asparagine; by host). 3 cysteine pairs are disulfide-bonded: cysteine 138-cysteine 259, cysteine 176-cysteine 273, and cysteine 188-cysteine 197. A disordered region spans residues 331–364 (PDNHPGFDSVESEITQNKTDPKPGQADPKPNQPF). Asparagine 347 and asparagine 396 each carry an N-linked (GlcNAc...) asparagine; by host glycan. Residues 406 to 422 (LGIAGLVLVGVILYVCL) form a helical membrane-spanning segment. Residues 423-442 (RRKKELKVCTERLDSPTLDL) lie on the Intravirion side of the membrane.

Belongs to the herpesviridae glycoprotein D family.

It is found in the virion membrane. Functionally, envelope glycoprotein that binds to host cell entry receptors, promoting the virus entry into host cells. May trigger fusion with host membrane, by recruiting the fusion machinery composed of gB and gH/gL. This is Envelope glycoprotein D (gD) from Equine herpesvirus 1 (strain Kentucky A) (EHV-1).